Reading from the N-terminus, the 202-residue chain is Putative 3-methyladenine DNA glycosylase (202 aa).

The protein belongs to the DNA glycosylase MPG family.

The polypeptide is Putative 3-methyladenine DNA glycosylase (Alkaliphilus oremlandii (strain OhILAs) (Clostridium oremlandii (strain OhILAs))).